Reading from the N-terminus, the 216-residue chain is Probable nicotinate-nucleotide adenylyltransferase (216 aa).

The protein belongs to the NadD family.

It catalyses the reaction nicotinate beta-D-ribonucleotide + ATP + H(+) = deamido-NAD(+) + diphosphate. It functions in the pathway cofactor biosynthesis; NAD(+) biosynthesis; deamido-NAD(+) from nicotinate D-ribonucleotide: step 1/1. Its function is as follows. Catalyzes the reversible adenylation of nicotinate mononucleotide (NaMN) to nicotinic acid adenine dinucleotide (NaAD). The polypeptide is Probable nicotinate-nucleotide adenylyltransferase (Shewanella baltica (strain OS185)).